A 250-amino-acid polypeptide reads, in one-letter code: CCN family member 5 (250 aa).

The first 23 residues, 1–23, serve as a signal peptide directing secretion; sequence MRGSPLIRLLATSFLCLLSMVCA. Cystine bridges form between C22-C50, C26-C52, C32-C53, C39-C56, C64-C78, and C70-C100. The IGFBP N-terminal domain maps to 24–103; the sequence is QLCRTPCTCP…DEDDGDCEVN (80 aa). Positions 98–164 constitute a VWFC domain; the sequence is GDCEVNGRRY…GKCCPEWVCD (67 aa). The 45-residue stretch at 194–238 folds into the TSP type-1 domain; the sequence is WPNWSTAWGPCSTTCGLGIATRVSNQNRFCQLEIQRRLCLPRPCL. N-linked (GlcNAc...) asparagine glycosylation is present at N196.

It belongs to the CCN family.

It is found in the secreted. Its function is as follows. May play an important role in modulating bone turnover. Promotes the adhesion of osteoblast cells and inhibits the binding of fibrinogen to integrin receptors. In addition, inhibits osteocalcin production. The sequence is that of CCN family member 5 (Ccn5) from Rattus norvegicus (Rat).